The chain runs to 70 residues: uncharacterized protein (70 aa).

The C2H2-type zinc-finger motif lies at 21–43 (YECPICGEIYIKRKSMITHLRKH).

This is an uncharacterized protein from Saccharolobus islandicus (Sulfolobus islandicus).